Consider the following 229-residue polypeptide: MGKKYIESAKLVDKNTLYAPDEAVDLVVKTSKAKFDETVELAVRLGVDPRHADQQVRGVVILPNGTGKKVRVLVFAKGDKAKEAEAAGADYVGAEELATKIQSENWFDFDVVVATPDMMGVVGRLGRVLGPKGLMPNPKSGTVTFDVAKALTEIKAGKVEYRVDKTAIVHVPVGKSSFGAEKLKQNFHALMDAIVKAKPASAKGQYVKSVALSSTMGPGIKINPVKVLD.

Belongs to the universal ribosomal protein uL1 family. In terms of assembly, part of the 50S ribosomal subunit.

Its function is as follows. Binds directly to 23S rRNA. The L1 stalk is quite mobile in the ribosome, and is involved in E site tRNA release. Protein L1 is also a translational repressor protein, it controls the translation of the L11 operon by binding to its mRNA. The sequence is that of Large ribosomal subunit protein uL1 from Clostridium acetobutylicum (strain ATCC 824 / DSM 792 / JCM 1419 / IAM 19013 / LMG 5710 / NBRC 13948 / NRRL B-527 / VKM B-1787 / 2291 / W).